A 298-amino-acid chain; its full sequence is tRNA pseudouridine synthase B (298 aa).

Asp-39 serves as the catalytic Nucleophile.

This sequence belongs to the pseudouridine synthase TruB family. Type 1 subfamily.

It catalyses the reaction uridine(55) in tRNA = pseudouridine(55) in tRNA. Its function is as follows. Responsible for synthesis of pseudouridine from uracil-55 in the psi GC loop of transfer RNAs. This chain is tRNA pseudouridine synthase B, found in Lactobacillus delbrueckii subsp. bulgaricus (strain ATCC BAA-365 / Lb-18).